Here is a 285-residue protein sequence, read N- to C-terminus: Urease accessory protein UreD (285 aa).

This sequence belongs to the UreD family. In terms of assembly, ureD, UreF and UreG form a complex that acts as a GTP-hydrolysis-dependent molecular chaperone, activating the urease apoprotein by helping to assemble the nickel containing metallocenter of UreC. The UreE protein probably delivers the nickel.

The protein localises to the cytoplasm. Its function is as follows. Required for maturation of urease via the functional incorporation of the urease nickel metallocenter. In Methylobacillus flagellatus (strain ATCC 51484 / DSM 6875 / VKM B-1610 / KT), this protein is Urease accessory protein UreD.